Here is a 142-residue protein sequence, read N- to C-terminus: Hemoglobin subunit alpha-2 (142 aa).

N-acetylserine is present on serine 1. The region spanning 1-142 is the Globin domain; it reads SLSTKDKETV…LSRALSEKYR (142 aa). Histidine 59 contacts O2. Histidine 88 provides a ligand contact to heme b.

This sequence belongs to the globin family. In terms of assembly, hb2 is a heterotetramer of two alpha-2 chains and two beta chains. In terms of tissue distribution, red blood cells.

In terms of biological role, involved in oxygen transport from gills to the various peripheral tissues. The chain is Hemoglobin subunit alpha-2 (hba2) from Trematomus newnesi (Dusky notothen).